A 207-amino-acid polypeptide reads, in one-letter code: Thiamine-phosphate synthase (207 aa).

Residues 35–39 and N67 each bind 4-amino-2-methyl-5-(diphosphooxymethyl)pyrimidine; that span reads QYRDK. Mg(2+)-binding residues include D68 and D86. T105 provides a ligand contact to 4-amino-2-methyl-5-(diphosphooxymethyl)pyrimidine. 132–134 contributes to the 2-[(2R,5Z)-2-carboxy-4-methylthiazol-5(2H)-ylidene]ethyl phosphate binding site; the sequence is SVT. K135 is a binding site for 4-amino-2-methyl-5-(diphosphooxymethyl)pyrimidine. G162 provides a ligand contact to 2-[(2R,5Z)-2-carboxy-4-methylthiazol-5(2H)-ylidene]ethyl phosphate.

Belongs to the thiamine-phosphate synthase family. Mg(2+) is required as a cofactor.

The enzyme catalyses 2-[(2R,5Z)-2-carboxy-4-methylthiazol-5(2H)-ylidene]ethyl phosphate + 4-amino-2-methyl-5-(diphosphooxymethyl)pyrimidine + 2 H(+) = thiamine phosphate + CO2 + diphosphate. It carries out the reaction 2-(2-carboxy-4-methylthiazol-5-yl)ethyl phosphate + 4-amino-2-methyl-5-(diphosphooxymethyl)pyrimidine + 2 H(+) = thiamine phosphate + CO2 + diphosphate. It catalyses the reaction 4-methyl-5-(2-phosphooxyethyl)-thiazole + 4-amino-2-methyl-5-(diphosphooxymethyl)pyrimidine + H(+) = thiamine phosphate + diphosphate. It functions in the pathway cofactor biosynthesis; thiamine diphosphate biosynthesis; thiamine phosphate from 4-amino-2-methyl-5-diphosphomethylpyrimidine and 4-methyl-5-(2-phosphoethyl)-thiazole: step 1/1. In terms of biological role, condenses 4-methyl-5-(beta-hydroxyethyl)thiazole monophosphate (THZ-P) and 2-methyl-4-amino-5-hydroxymethyl pyrimidine pyrophosphate (HMP-PP) to form thiamine monophosphate (TMP). This is Thiamine-phosphate synthase from Pseudomonas putida (strain ATCC 700007 / DSM 6899 / JCM 31910 / BCRC 17059 / LMG 24140 / F1).